The following is a 324-amino-acid chain: tRNA pseudouridine synthase B (324 aa).

Asp-49 functions as the Nucleophile in the catalytic mechanism.

The protein belongs to the pseudouridine synthase TruB family. Type 1 subfamily.

The enzyme catalyses uridine(55) in tRNA = pseudouridine(55) in tRNA. Its function is as follows. Responsible for synthesis of pseudouridine from uracil-55 in the psi GC loop of transfer RNAs. In Brucella anthropi (strain ATCC 49188 / DSM 6882 / CCUG 24695 / JCM 21032 / LMG 3331 / NBRC 15819 / NCTC 12168 / Alc 37) (Ochrobactrum anthropi), this protein is tRNA pseudouridine synthase B.